A 90-amino-acid chain; its full sequence is Small ribosomal subunit protein uS15c (90 aa).

This sequence belongs to the universal ribosomal protein uS15 family. Part of the 30S ribosomal subunit.

It is found in the plastid. Its subcellular location is the chloroplast. The protein is Small ribosomal subunit protein uS15c (rps15) of Piper cenocladum (Ant piper).